We begin with the raw amino-acid sequence, 86 residues long: Neurotoxin-like protein pMD18-NTL3 (86 aa).

The N-terminal stretch at 1 to 21 (MKTLLLTLVVLTIACLDLGYT) is a signal peptide. 4 disulfide bridges follow: C24-C45, C38-C62, C66-C78, and C79-C84.

Belongs to the three-finger toxin family. Short-chain subfamily. Orphan group IX sub-subfamily. As to expression, expressed by the venom gland.

It is found in the secreted. The sequence is that of Neurotoxin-like protein pMD18-NTL3 from Bungarus multicinctus (Many-banded krait).